Here is a 92-residue protein sequence, read N- to C-terminus: MVRSVWKGPFVEASLLKKADAARASGRHDVIKIWSRRSTILPQFVGLTFGVYNGQKHVPVAVNEEMVGHKFGEFSPTRTFHGHSGDKKAKKA.

The protein belongs to the universal ribosomal protein uS19 family.

In terms of biological role, protein S19 forms a complex with S13 that binds strongly to the 16S ribosomal RNA. In Bradyrhizobium sp. (strain BTAi1 / ATCC BAA-1182), this protein is Small ribosomal subunit protein uS19.